The following is a 158-amino-acid chain: Cyclic pyranopterin monophosphate synthase (158 aa).

Residues 74-76 (MCH) and 112-113 (ME) contribute to the substrate site. Aspartate 127 is an active-site residue.

It belongs to the MoaC family. In terms of assembly, homohexamer; trimer of dimers.

The enzyme catalyses (8S)-3',8-cyclo-7,8-dihydroguanosine 5'-triphosphate = cyclic pyranopterin phosphate + diphosphate. Its pathway is cofactor biosynthesis; molybdopterin biosynthesis. Catalyzes the conversion of (8S)-3',8-cyclo-7,8-dihydroguanosine 5'-triphosphate to cyclic pyranopterin monophosphate (cPMP). In Helicobacter pylori (strain Shi470), this protein is Cyclic pyranopterin monophosphate synthase.